A 464-amino-acid chain; its full sequence is Fumarate hydratase class II (464 aa).

Residues 98-100 (SGT), Arg126, 129-132 (HPND), 139-141 (SSN), and Thr187 each bind substrate. The active-site Proton donor/acceptor is His188. Residue Ser318 is part of the active site. Substrate-binding positions include Ser319 and 324–326 (KVN).

It belongs to the class-II fumarase/aspartase family. Fumarase subfamily. Homotetramer.

It localises to the cytoplasm. The catalysed reaction is (S)-malate = fumarate + H2O. Its pathway is carbohydrate metabolism; tricarboxylic acid cycle; (S)-malate from fumarate: step 1/1. Involved in the TCA cycle. Catalyzes the stereospecific interconversion of fumarate to L-malate. This is Fumarate hydratase class II from Photorhabdus laumondii subsp. laumondii (strain DSM 15139 / CIP 105565 / TT01) (Photorhabdus luminescens subsp. laumondii).